A 210-amino-acid polypeptide reads, in one-letter code: MPDTVCRPPRLILASSSRYRRALLERLGIPFDVVSPDLDETPLAGETPAATALRLAGAKARAVAATIDAPDGVLVIGSDQVATFDGHQIGKPGTHERALAQLVSMQGREVEFHSALCLYDSRTDNAQVEDIVTHVRFRSLPEAELDAYLRAETPYDVAGSAKSEGLGIALLDAIDSDDPTALVGLPLIALTRMLRAADYPLFATTRGDRA.

The active-site Proton acceptor is D79.

Belongs to the Maf family. YceF subfamily. A divalent metal cation is required as a cofactor.

It is found in the cytoplasm. It carries out the reaction N(7)-methyl-GTP + H2O = N(7)-methyl-GMP + diphosphate + H(+). Nucleoside triphosphate pyrophosphatase that hydrolyzes 7-methyl-GTP (m(7)GTP). May have a dual role in cell division arrest and in preventing the incorporation of modified nucleotides into cellular nucleic acids. This is 7-methyl-GTP pyrophosphatase from Burkholderia orbicola (strain AU 1054).